The following is a 170-amino-acid chain: MHCPFCRHPDSRVVDSRTTDDGTSIRRRRQCPDCSRRFTTVETCSLMVVKRSGVTEPFSRTKVISGVRKACQGRPVTEDALAKLGQRVEEAVRATGSAELTTHDVGLAILGPLQELDLVAYLRFASVYRAFDSLEDFEAAIVELRAQRPSAEDRGSGETLEVPAPAIAAD.

A zinc finger spans residues 3–34; the sequence is CPFCRHPDSRVVDSRTTDDGTSIRRRRQCPDC. Positions 46–136 constitute an ATP-cone domain; sequence LMVVKRSGVT…VYRAFDSLED (91 aa). The tract at residues 148 to 170 is disordered; it reads RPSAEDRGSGETLEVPAPAIAAD.

The protein belongs to the NrdR family. Zn(2+) is required as a cofactor.

Negatively regulates transcription of bacterial ribonucleotide reductase nrd genes and operons by binding to NrdR-boxes. The sequence is that of Transcriptional repressor NrdR from Streptomyces griseus subsp. griseus (strain JCM 4626 / CBS 651.72 / NBRC 13350 / KCC S-0626 / ISP 5235).